The chain runs to 132 residues: Small ribosomal subunit protein uS8 (132 aa).

The protein belongs to the universal ribosomal protein uS8 family. Part of the 30S ribosomal subunit. Contacts proteins S5 and S12.

Functionally, one of the primary rRNA binding proteins, it binds directly to 16S rRNA central domain where it helps coordinate assembly of the platform of the 30S subunit. The polypeptide is Small ribosomal subunit protein uS8 (Rhodospirillum rubrum (strain ATCC 11170 / ATH 1.1.1 / DSM 467 / LMG 4362 / NCIMB 8255 / S1)).